We begin with the raw amino-acid sequence, 274 residues long: Penicillin-insensitive murein endopeptidase (274 aa).

A signal peptide spans 1-19 (MKKTAIALLAWFVSSASLA). 3 disulfide bridges follow: C44–C265, C187–C235, and C216–C223. Zn(2+) contacts are provided by H110, H113, D120, D147, H150, and H211. Positions 225–274 (DQPLPPPGDGCGAELQSWFEPPKPGTTKPEKKTPPPLPPSCQALLDEHVL) are disordered.

This sequence belongs to the peptidase M74 family. As to quaternary structure, dimer. It depends on Zn(2+) as a cofactor.

Its subcellular location is the periplasm. Murein endopeptidase that cleaves the D-alanyl-meso-2,6-diamino-pimelyl amide bond that connects peptidoglycan strands. Likely plays a role in the removal of murein from the sacculus. In Salmonella choleraesuis (strain SC-B67), this protein is Penicillin-insensitive murein endopeptidase.